The sequence spans 218 residues: Flagellin B1 (218 aa).

Positions 1 to 12 (MNIKEFLSNKKG) are excised as a propeptide. 5 N-linked (GlcNAc...) asparagine glycosylation sites follow: Asn38, Asn71, Asn77, Asn115, and Asn136.

It belongs to the archaeal flagellin family. In terms of processing, N-linked glycans consist of the 779 Da trisaccharide beta-ManNAc(Thr)-(1-4)-beta-GlcNAc3NAcA-(1-3)-beta-GlcNAc.

It is found in the archaeal flagellum. In terms of biological role, flagellin is the subunit protein which polymerizes to form the filaments of archaeal flagella. In Methanococcus voltae, this protein is Flagellin B1 (flaB1).